We begin with the raw amino-acid sequence, 651 residues long: MQRFKISSEFNPSGDQPGAIDSLVRGISCGAKEQTLLGVTGSGKTFTMASVIEQTQRPAIIIAHNKTLAAQLHEEMRSFFPENAVEYFVSYYDYYQPEAYIPQSDVYIEKDALINDKIDLLRHSATRSLLERRDVVVVASVSCIYGLGSPELYSEMTVPIALGMKLDMCQLQERLVELQYKHGNRYERGSFSVQGDVLSVFPSHYEDRIWKISFFGDEVDSIQEVDPKSGMVTLKLEKIKIFPNSHYVTPRPTLLQAISEIEKELDECALQFKQCNKIVEADRIVERTRFDIEMMRETGTCKGIENYSRYLCGKEAGDPPNTLLDYLPQDAIMFIDESHMTVPQIRAMYNGDRMRKANLINHGFRMPSALDNRPLTFAEWEDRKPTVVYVSATPGQYELQQTGGVATEQLIRPTGLLDPVCIVKGADGQIHDVMCESQATIARGYRVLITTLTKKMAENLTEYMREMGIKVAYLHSDVKTLERIEIISDLRLGVIDVLVGVNLMREGLDIPECALVGILDADKEGFLRSTTSLIQTIGRAARNVEGRVILYANVITKSMRTAMEETDRRRDIQRKYNQEHSIVPRTIQKPVQTSLSERVGSSRKKVSRDTNTDPANRDIVELQKEMLLCAENLDFERAVEIRNEIKRLTAP.

Residues 25 to 178 enclose the Helicase ATP-binding domain; sequence RGISCGAKEQ…CQLQERLVEL (154 aa). 38–45 provides a ligand contact to ATP; the sequence is GVTGSGKT. A Beta-hairpin motif is present at residues 91–114; that stretch reads YYDYYQPEAYIPQSDVYIEKDALI. In terms of domain architecture, Helicase C-terminal spans 427–591; the sequence is DGQIHDVMCE…IVPRTIQKPV (165 aa). Positions 593–615 are disordered; sequence TSLSERVGSSRKKVSRDTNTDPA. Residues 616–651 enclose the UVR domain; the sequence is NRDIVELQKEMLLCAENLDFERAVEIRNEIKRLTAP.

The protein belongs to the UvrB family. In terms of assembly, forms a heterotetramer with UvrA during the search for lesions. Interacts with UvrC in an incision complex.

It localises to the cytoplasm. Functionally, the UvrABC repair system catalyzes the recognition and processing of DNA lesions. A damage recognition complex composed of 2 UvrA and 2 UvrB subunits scans DNA for abnormalities. Upon binding of the UvrA(2)B(2) complex to a putative damaged site, the DNA wraps around one UvrB monomer. DNA wrap is dependent on ATP binding by UvrB and probably causes local melting of the DNA helix, facilitating insertion of UvrB beta-hairpin between the DNA strands. Then UvrB probes one DNA strand for the presence of a lesion. If a lesion is found the UvrA subunits dissociate and the UvrB-DNA preincision complex is formed. This complex is subsequently bound by UvrC and the second UvrB is released. If no lesion is found, the DNA wraps around the other UvrB subunit that will check the other stand for damage. This is UvrABC system protein B from Anaplasma marginale (strain Florida).